A 401-amino-acid chain; its full sequence is Ornithine aminotransferase (401 aa).

Lys-258 carries the N6-(pyridoxal phosphate)lysine modification.

This sequence belongs to the class-III pyridoxal-phosphate-dependent aminotransferase family. OAT subfamily. Pyridoxal 5'-phosphate serves as cofactor.

The protein resides in the cytoplasm. The catalysed reaction is a 2-oxocarboxylate + L-ornithine = L-glutamate 5-semialdehyde + an L-alpha-amino acid. The protein operates within amino-acid biosynthesis; L-proline biosynthesis; L-glutamate 5-semialdehyde from L-ornithine: step 1/1. In terms of biological role, catalyzes the interconversion of ornithine to glutamate semialdehyde. This is Ornithine aminotransferase from Bacillus subtilis (strain 168).